Consider the following 249-residue polypeptide: Uridylate kinase (249 aa).

Lys-21–Gly-24 provides a ligand contact to ATP. Gly-63 serves as a coordination point for UMP. ATP is bound by residues Gly-64 and Arg-68. Residues Asp-84 and Thr-145–Thr-152 each bind UMP. The ATP site is built by Thr-172, Tyr-178, and Asp-181.

Belongs to the UMP kinase family. In terms of assembly, homohexamer.

It is found in the cytoplasm. It carries out the reaction UMP + ATP = UDP + ADP. It functions in the pathway pyrimidine metabolism; CTP biosynthesis via de novo pathway; UDP from UMP (UMPK route): step 1/1. With respect to regulation, inhibited by UTP. Catalyzes the reversible phosphorylation of UMP to UDP. This is Uridylate kinase from Francisella tularensis subsp. tularensis (strain FSC 198).